Reading from the N-terminus, the 744-residue chain is Kinesin-like protein KIF2A (744 aa).

Residues 66-186 (LVPDEEIEPS…QQELREKRAQ (121 aa)) form a disordered region. S75 carries the post-translational modification Phosphoserine. 2 positions are modified to phosphothreonine: T78 and T97. The residue at position 100 (S100) is a Phosphoserine. K102 carries the N6-acetyllysine modification. A compositionally biased stretch (polar residues) spans 123–140 (FPEQSSSAQQNGSVSDIS). Phosphoserine occurs at positions 135 and 140. The stretch at 154-187 (RRKSNCVKEVEKLQEKREKRRLQQQELREKRAQD) forms a coiled coil. Residues 159-186 (CVKEVEKLQEKREKRRLQQQELREKRAQ) are compositionally biased toward basic and acidic residues. Positions 223–553 (RICVCVRKRP…LRYANRVKEF (331 aa)) constitute a Kinesin motor domain. 313–320 (GQTGSGKT) lines the ATP pocket. A coiled-coil region spans residues 698–737 (ATQLEAILEQKIDILTELRDKVKSFRAALQEEEQASKQIN).

Belongs to the TRAFAC class myosin-kinesin ATPase superfamily. Kinesin family. MCAK/KIF2 subfamily. In terms of assembly, interacts with AURKA and PLK1. Interacts with PSRC1. Interacts with MCRS1; the interaction enhances recruitment of KIF2A to the minus ends of spindle microtubules which promotes chromosome alignment.

The protein resides in the cytoplasm. It localises to the cytoskeleton. It is found in the microtubule organizing center. The protein localises to the centrosome. Its subcellular location is the spindle pole. The protein resides in the spindle. In terms of biological role, plus end-directed microtubule-dependent motor required for normal brain development. May regulate microtubule dynamics during axonal growth. Required for normal progression through mitosis. Required for normal congress of chromosomes at the metaphase plate. Required for normal spindle dynamics during mitosis. Promotes spindle turnover. Implicated in formation of bipolar mitotic spindles. Has microtubule depolymerization activity. The chain is Kinesin-like protein KIF2A from Pongo abelii (Sumatran orangutan).